We begin with the raw amino-acid sequence, 235 residues long: Uridylate kinase (235 aa).

Residue 9–12 (KLSG) coordinates ATP. The segment at 17 to 22 (GKDGYG) is involved in allosteric activation by GTP. A UMP-binding site is contributed by Gly-51. Gly-52 and Arg-56 together coordinate ATP. Residues Asp-71 and 132–139 (TGNPYFTT) contribute to the UMP site. ATP-binding residues include Thr-159, Tyr-165, and Asp-168.

Belongs to the UMP kinase family. As to quaternary structure, homohexamer.

Its subcellular location is the cytoplasm. It catalyses the reaction UMP + ATP = UDP + ADP. It functions in the pathway pyrimidine metabolism; CTP biosynthesis via de novo pathway; UDP from UMP (UMPK route): step 1/1. With respect to regulation, allosterically activated by GTP. Inhibited by UTP. Its function is as follows. Catalyzes the reversible phosphorylation of UMP to UDP. In Chlorobium luteolum (strain DSM 273 / BCRC 81028 / 2530) (Pelodictyon luteolum), this protein is Uridylate kinase.